The chain runs to 143 residues: Ribonuclease H (143 aa).

The RNase H type-1 domain maps to 1–140 (MKVEIYTDGA…VDALANLGIE (140 aa)). Mg(2+)-binding residues include Asp-8, Glu-46, Asp-68, and Asp-132.

The protein belongs to the RNase H family. In terms of assembly, monomer. Requires Mg(2+) as cofactor.

The protein localises to the cytoplasm. The enzyme catalyses Endonucleolytic cleavage to 5'-phosphomonoester.. Its function is as follows. Endonuclease that specifically degrades the RNA of RNA-DNA hybrids. This Legionella pneumophila (strain Paris) protein is Ribonuclease H.